A 411-amino-acid polypeptide reads, in one-letter code: Acetylornithine aminotransferase, mitochondrial (411 aa).

Residue Lys262 is modified to N6-(pyridoxal phosphate)lysine.

It belongs to the class-III pyridoxal-phosphate-dependent aminotransferase family. Requires pyridoxal 5'-phosphate as cofactor.

The protein localises to the mitochondrion matrix. It carries out the reaction N(2)-acetyl-L-ornithine + 2-oxoglutarate = N-acetyl-L-glutamate 5-semialdehyde + L-glutamate. It participates in amino-acid biosynthesis; L-arginine biosynthesis; N(2)-acetyl-L-ornithine from L-glutamate: step 4/4. The chain is Acetylornithine aminotransferase, mitochondrial (ARG8) from Yarrowia lipolytica (strain CLIB 122 / E 150) (Yeast).